The primary structure comprises 403 residues: Phosphopentomutase (403 aa).

Residues D13, D298, H303, D339, H340, and H351 each contribute to the Mn(2+) site.

Belongs to the phosphopentomutase family. Mn(2+) is required as a cofactor.

The protein resides in the cytoplasm. The catalysed reaction is 2-deoxy-alpha-D-ribose 1-phosphate = 2-deoxy-D-ribose 5-phosphate. It carries out the reaction alpha-D-ribose 1-phosphate = D-ribose 5-phosphate. It participates in carbohydrate degradation; 2-deoxy-D-ribose 1-phosphate degradation; D-glyceraldehyde 3-phosphate and acetaldehyde from 2-deoxy-alpha-D-ribose 1-phosphate: step 1/2. Its function is as follows. Isomerase that catalyzes the conversion of deoxy-ribose 1-phosphate (dRib-1-P) and ribose 1-phosphate (Rib-1-P) to deoxy-ribose 5-phosphate (dRib-5-P) and ribose 5-phosphate (Rib-5-P), respectively. The chain is Phosphopentomutase from Streptococcus equi subsp. zooepidemicus (strain H70).